Here is a 275-residue protein sequence, read N- to C-terminus: NH(3)-dependent NAD(+) synthetase (275 aa).

Residue 46 to 53 (GISGGQDS) coordinates ATP. Asp-52 contacts Mg(2+). Arg-140 contacts deamido-NAD(+). Thr-160 is a binding site for ATP. Glu-165 lines the Mg(2+) pocket. Residues Lys-173 and Asp-180 each coordinate deamido-NAD(+). Lys-189 and Thr-211 together coordinate ATP. 260–261 (HK) provides a ligand contact to deamido-NAD(+).

The protein belongs to the NAD synthetase family. As to quaternary structure, homodimer.

It carries out the reaction deamido-NAD(+) + NH4(+) + ATP = AMP + diphosphate + NAD(+) + H(+). Its pathway is cofactor biosynthesis; NAD(+) biosynthesis; NAD(+) from deamido-NAD(+) (ammonia route): step 1/1. Catalyzes the ATP-dependent amidation of deamido-NAD to form NAD. Uses ammonia as a nitrogen source. This is NH(3)-dependent NAD(+) synthetase from Salmonella enteritidis PT4 (strain P125109).